A 1516-amino-acid polypeptide reads, in one-letter code: Neurite extension and migration factor (1516 aa).

Residues 380 to 405 (LDKKKGKEEGQEDKGVEKKDGKDNGE) show a composition bias toward basic and acidic residues. Disordered regions lie at residues 380-440 (LDKK…GSFS), 589-610 (QKKKKQRNTNTDSIKTPFSQKQ), 1158-1225 (TFND…STKK), 1373-1419 (TPQE…PGYN), and 1437-1479 (LGNN…ESGT). Polar residues-rich tracts occupy residues 596–610 (NTNTDSIKTPFSQKQ), 1158–1170 (TFNDPSGQISTNN), and 1185–1194 (GAMNQSSSQK). Residues 1443 to 1453 (THKKLYRHKSS) are compositionally biased toward basic residues. Basic and acidic residues predominate over residues 1456–1479 (ALRDEKCKGKHMEREQVHKDESGT).

In terms of tissue distribution, highly expressed in fetal and adult brain, predominantly in the cerebral cortex and the cerebellum. Also expressed in other tissues but to a lesser extent.

Its subcellular location is the nucleus. The protein resides in the cytoplasm. Functionally, involved in neurite outgrowth by regulating cell-cell adhesion via the N-cadherin signaling pathway. May act by regulating expression of protein-coding genes, such as N-cadherins and integrin beta-1 (ITGB1). This chain is Neurite extension and migration factor, found in Homo sapiens (Human).